A 348-amino-acid polypeptide reads, in one-letter code: Centromere protein N (348 aa).

This sequence belongs to the CENP-N/CHL4 family.

The protein resides in the nucleus. It localises to the chromosome. Its subcellular location is the centromere. Probable component of a centromeric complex involved in assembly of kinetochore proteins, mitotic progression and chromosome segregation. This Xenopus tropicalis (Western clawed frog) protein is Centromere protein N (cenpn).